A 494-amino-acid polypeptide reads, in one-letter code: Glycosyl hydrolase family 109 protein (494 aa).

Residues 1-32 are disordered; that stretch reads MNDDARPAPEPQDIPPHSGAADEVNRQDPSRR. Residues 1-58 constitute a signal peptide (tat-type signal); the sequence is MNDDARPAPEPQDIPPHSGAADEVNRQDPSRRSVLWTTAGVAGAGLGLGALGAGTASA. NAD(+) is bound by residues 104–105, aspartate 126, 175–178, 195–196, and asparagine 224; these read NR, WELH, and EC. Residues tyrosine 253, arginine 272, 284–287, and tyrosine 366 contribute to the substrate site; that span reads YPNH. Tyrosine 284 serves as a coordination point for NAD(+).

This sequence belongs to the Gfo/Idh/MocA family. Glycosyl hydrolase 109 subfamily. It depends on NAD(+) as a cofactor. Predicted to be exported by the Tat system. The position of the signal peptide cleavage has not been experimentally proven.

Functionally, glycosidase. The sequence is that of Glycosyl hydrolase family 109 protein from Streptomyces filamentosus (Streptomyces roseosporus).